The primary structure comprises 529 residues: MNNARPIRRALLSVSDKTGILEFAQALHAQGVELLSTGGTAKLLADNGVPVIEVSDYTGHPEIMDGRVKTLHPKVHGGILARRGQDEDVMAANNIGPIDLVAVNLYPFAATVAKPGCTLEDAIENIDIGGPTMVRAAAKNHKDVVIVVNAKDYDRVLAEMSANGGSTSHATRFDLAIAAFEHTAAYDGMIANYFGTMVPAHSSDECHDDSKFPRTFNTQLVKKQDLRYGENSHQSAAFYVDLNSDEASVATATQLQGKALSYNNIADTDAALECVKEFDAPACVIVKHANPCGVALGDNLLDAYNRAYKTDPTSAFGGIIAFNRELDGETAAAIVERQFVEVIIAPVVSQAARDVVAKKTNVRLLECGQWTAQTKGLDYKRVNGGLLIQDRDQGMVTEAELKVVTKRVPTEAELKDLMFCWKVAKFVKSNAIVYAKEGMTIGVGAGQMSRVYSAKIAGIKAADEGLVVEGSVMASDAFFPFRDGIDAAAAAGISCIIQPGGSIRDEEVIAAADEHGMAMVFTNMRHFRH.

Residues 1–148 (MNNARPIRRA…KNHKDVVIVV (148 aa)) enclose the MGS-like domain.

This sequence belongs to the PurH family.

The catalysed reaction is (6R)-10-formyltetrahydrofolate + 5-amino-1-(5-phospho-beta-D-ribosyl)imidazole-4-carboxamide = 5-formamido-1-(5-phospho-D-ribosyl)imidazole-4-carboxamide + (6S)-5,6,7,8-tetrahydrofolate. It catalyses the reaction IMP + H2O = 5-formamido-1-(5-phospho-D-ribosyl)imidazole-4-carboxamide. It functions in the pathway purine metabolism; IMP biosynthesis via de novo pathway; 5-formamido-1-(5-phospho-D-ribosyl)imidazole-4-carboxamide from 5-amino-1-(5-phospho-D-ribosyl)imidazole-4-carboxamide (10-formyl THF route): step 1/1. The protein operates within purine metabolism; IMP biosynthesis via de novo pathway; IMP from 5-formamido-1-(5-phospho-D-ribosyl)imidazole-4-carboxamide: step 1/1. The sequence is that of Bifunctional purine biosynthesis protein PurH from Shewanella amazonensis (strain ATCC BAA-1098 / SB2B).